The primary structure comprises 340 residues: Ketol-acid reductoisomerase (NADP(+)) (340 aa).

The KARI N-terminal Rossmann domain maps to 1–183 (MAITVYYDKD…GGGRTGIIET (183 aa)). NADP(+) contacts are provided by residues 26–29 (FGSQ), Arg-49, Ser-52, Ser-54, and 84–87 (DEIQ). His-109 is a catalytic residue. Position 135 (Gly-135) interacts with NADP(+). A KARI C-terminal knotted domain is found at 184–329 (TFKAETETDL…RNLRAMMPWI (146 aa)). Mg(2+) is bound by residues Asp-192, Glu-196, Glu-228, and Glu-232. Position 253 (Ser-253) interacts with substrate.

This sequence belongs to the ketol-acid reductoisomerase family. Requires Mg(2+) as cofactor.

The catalysed reaction is (2R)-2,3-dihydroxy-3-methylbutanoate + NADP(+) = (2S)-2-acetolactate + NADPH + H(+). It catalyses the reaction (2R,3R)-2,3-dihydroxy-3-methylpentanoate + NADP(+) = (S)-2-ethyl-2-hydroxy-3-oxobutanoate + NADPH + H(+). The protein operates within amino-acid biosynthesis; L-isoleucine biosynthesis; L-isoleucine from 2-oxobutanoate: step 2/4. It functions in the pathway amino-acid biosynthesis; L-valine biosynthesis; L-valine from pyruvate: step 2/4. Involved in the biosynthesis of branched-chain amino acids (BCAA). Catalyzes an alkyl-migration followed by a ketol-acid reduction of (S)-2-acetolactate (S2AL) to yield (R)-2,3-dihydroxy-isovalerate. In the isomerase reaction, S2AL is rearranged via a Mg-dependent methyl migration to produce 3-hydroxy-3-methyl-2-ketobutyrate (HMKB). In the reductase reaction, this 2-ketoacid undergoes a metal-dependent reduction by NADPH to yield (R)-2,3-dihydroxy-isovalerate. The protein is Ketol-acid reductoisomerase (NADP(+)) of Campylobacter jejuni subsp. jejuni serotype O:6 (strain 81116 / NCTC 11828).